Consider the following 381-residue polypeptide: N-acetylglucosamine-6-phosphate deacetylase (381 aa).

A divalent metal cation is bound at residue E129. Position 140 to 141 (V140 to H141) interacts with substrate. A divalent metal cation contacts are provided by H193 and H214. Residues N217–A218, R226, and D246–H249 each bind substrate. D271 acts as the Proton donor/acceptor in catalysis. I306–G308 serves as a coordination point for substrate.

This sequence belongs to the metallo-dependent hydrolases superfamily. NagA family. As to quaternary structure, homotetramer. Requires a divalent metal cation as cofactor.

It catalyses the reaction N-acetyl-D-glucosamine 6-phosphate + H2O = D-glucosamine 6-phosphate + acetate. It functions in the pathway amino-sugar metabolism; N-acetylneuraminate degradation; D-fructose 6-phosphate from N-acetylneuraminate: step 4/5. In terms of biological role, involved in the first committed step in the biosynthesis of amino-sugar-nucleotides. Catalyzes the hydrolysis of the N-acetyl group of N-acetylglucosamine-6-phosphate (GlcNAc-6-P) to yield glucosamine 6-phosphate and acetate. In Haemophilus influenzae (strain ATCC 51907 / DSM 11121 / KW20 / Rd), this protein is N-acetylglucosamine-6-phosphate deacetylase (nagA).